The chain runs to 369 residues: D-alanine--D-alanine ligase (369 aa).

Residues 152–359 (KKLFAAEGLP…YPSLLATMVE (208 aa)) form the ATP-grasp domain. 180–235 (RERLGLPVFVKPARGGSSIGVSRVSSWDELDAAVAAARDHDPKVIVEAAIAGRELE) contributes to the ATP binding site. Mg(2+)-binding residues include Asp-314, Glu-326, and Asn-328.

It belongs to the D-alanine--D-alanine ligase family. Mg(2+) is required as a cofactor. Mn(2+) serves as cofactor.

The protein localises to the cytoplasm. It catalyses the reaction 2 D-alanine + ATP = D-alanyl-D-alanine + ADP + phosphate + H(+). It participates in cell wall biogenesis; peptidoglycan biosynthesis. Cell wall formation. This Mycobacterium avium (strain 104) protein is D-alanine--D-alanine ligase.